We begin with the raw amino-acid sequence, 424 residues long: Dihydroorotase-like protein (424 aa).

Belongs to the metallo-dependent hydrolases superfamily. DHOase family. PyrC' subfamily. Heterododecamer of 6 active PyrB subunits and 6 non-catalytic PyrC' subunits.

Its function is as follows. Non-functional DHOase. The protein is Dihydroorotase-like protein of Pseudomonas putida (Arthrobacter siderocapsulatus).